A 428-amino-acid polypeptide reads, in one-letter code: 3-phosphoshikimate 1-carboxyvinyltransferase (428 aa).

Residues K23, S24, and R28 each coordinate 3-phosphoshikimate. Phosphoenolpyruvate is bound at residue K23. Residues G97 and R125 each coordinate phosphoenolpyruvate. 7 residues coordinate 3-phosphoshikimate: S170, S171, Q172, S198, D314, N337, and K341. Q172 provides a ligand contact to phosphoenolpyruvate. D314 (proton acceptor) is an active-site residue. The phosphoenolpyruvate site is built by R345, R387, and K412.

This sequence belongs to the EPSP synthase family. Monomer.

The protein resides in the cytoplasm. The enzyme catalyses 3-phosphoshikimate + phosphoenolpyruvate = 5-O-(1-carboxyvinyl)-3-phosphoshikimate + phosphate. It participates in metabolic intermediate biosynthesis; chorismate biosynthesis; chorismate from D-erythrose 4-phosphate and phosphoenolpyruvate: step 6/7. Functionally, catalyzes the transfer of the enolpyruvyl moiety of phosphoenolpyruvate (PEP) to the 5-hydroxyl of shikimate-3-phosphate (S3P) to produce enolpyruvyl shikimate-3-phosphate and inorganic phosphate. The sequence is that of 3-phosphoshikimate 1-carboxyvinyltransferase from Edwardsiella ictaluri (strain 93-146).